The following is a 325-amino-acid chain: Eukaryotic translation initiation factor 3 subunit I (325 aa).

WD repeat units follow at residues Gly-8–Thr-47, Gly-50–Lys-91, Cys-144–Asn-183, and Glu-186–Thr-225. Lys-264 is subject to N6-acetyllysine. Lys-282 is covalently cross-linked (Glycyl lysine isopeptide (Lys-Gly) (interchain with G-Cter in ubiquitin)). The stretch at Gly-283–Glu-324 is one WD 5 repeat. Tyr-308 carries the post-translational modification Phosphotyrosine.

Belongs to the eIF-3 subunit I family. In terms of assembly, component of the eukaryotic translation initiation factor 3 (eIF-3) complex, which is composed of 13 subunits: EIF3A, EIF3B, EIF3C, EIF3D, EIF3E, EIF3F, EIF3G, EIF3H, EIF3I, EIF3J, EIF3K, EIF3L and EIF3M. The eIF-3 complex appears to include 3 stable modules: module A is composed of EIF3A, EIF3B, EIF3G and EIF3I; module B is composed of EIF3F, EIF3H, and EIF3M; and module C is composed of EIF3C, EIF3D, EIF3E, EIF3K and EIF3L. EIF3C of module C binds EIF3B of module A and EIF3H of module B, thereby linking the three modules. EIF3J is a labile subunit that binds to the eIF-3 complex via EIF3B. The eIF-3 complex interacts with RPS6KB1 under conditions of nutrient depletion. Mitogenic stimulation leads to binding and activation of a complex composed of MTOR and RPTOR, leading to phosphorylation and release of RPS6KB1 and binding of EIF4B to eIF-3. In terms of processing, phosphorylated by TGF-beta type II receptor.

The protein resides in the cytoplasm. In terms of biological role, component of the eukaryotic translation initiation factor 3 (eIF-3) complex, which is required for several steps in the initiation of protein synthesis. The eIF-3 complex associates with the 40S ribosome and facilitates the recruitment of eIF-1, eIF-1A, eIF-2:GTP:methionyl-tRNAi and eIF-5 to form the 43S pre-initiation complex (43S PIC). The eIF-3 complex stimulates mRNA recruitment to the 43S PIC and scanning of the mRNA for AUG recognition. The eIF-3 complex is also required for disassembly and recycling of post-termination ribosomal complexes and subsequently prevents premature joining of the 40S and 60S ribosomal subunits prior to initiation. The eIF-3 complex specifically targets and initiates translation of a subset of mRNAs involved in cell proliferation, including cell cycling, differentiation and apoptosis, and uses different modes of RNA stem-loop binding to exert either translational activation or repression. This Rattus norvegicus (Rat) protein is Eukaryotic translation initiation factor 3 subunit I (Eif3i).